Reading from the N-terminus, the 120-residue chain is UPF0231 protein YacL (120 aa).

This sequence belongs to the UPF0231 family.

This Shigella flexneri protein is UPF0231 protein YacL (yacL).